A 91-amino-acid polypeptide reads, in one-letter code: Probable Fe(2+)-trafficking protein (91 aa).

Belongs to the Fe(2+)-trafficking protein family.

In terms of biological role, could be a mediator in iron transactions between iron acquisition and iron-requiring processes, such as synthesis and/or repair of Fe-S clusters in biosynthetic enzymes. This chain is Probable Fe(2+)-trafficking protein, found in Thiobacillus denitrificans (strain ATCC 25259 / T1).